Reading from the N-terminus, the 477-residue chain is Bifunctional protein HldE (477 aa).

A ribokinase region spans residues 1 to 318; that stretch reads MKVTLPEFER…ENAVRGRADT (318 aa). The residue at position 179 (lysine 179) is an N6-acetyllysine. ATP is bound at residue 195–198; it reads NLSE. Aspartate 264 is an active-site residue. The cytidylyltransferase stretch occupies residues 344-477; it reads MTNGVFDILH…IKKIQQDKKG (134 aa).

It in the N-terminal section; belongs to the carbohydrate kinase PfkB family. In the C-terminal section; belongs to the cytidylyltransferase family. As to quaternary structure, homodimer.

It carries out the reaction D-glycero-beta-D-manno-heptose 7-phosphate + ATP = D-glycero-beta-D-manno-heptose 1,7-bisphosphate + ADP + H(+). It catalyses the reaction D-glycero-beta-D-manno-heptose 1-phosphate + ATP + H(+) = ADP-D-glycero-beta-D-manno-heptose + diphosphate. It participates in nucleotide-sugar biosynthesis; ADP-L-glycero-beta-D-manno-heptose biosynthesis; ADP-L-glycero-beta-D-manno-heptose from D-glycero-beta-D-manno-heptose 7-phosphate: step 1/4. The protein operates within nucleotide-sugar biosynthesis; ADP-L-glycero-beta-D-manno-heptose biosynthesis; ADP-L-glycero-beta-D-manno-heptose from D-glycero-beta-D-manno-heptose 7-phosphate: step 3/4. It functions in the pathway bacterial outer membrane biogenesis; LPS core biosynthesis. Catalyzes the phosphorylation of D-glycero-D-manno-heptose 7-phosphate at the C-1 position to selectively form D-glycero-beta-D-manno-heptose-1,7-bisphosphate. Its function is as follows. Catalyzes the ADP transfer from ATP to D-glycero-beta-D-manno-heptose 1-phosphate, yielding ADP-D-glycero-beta-D-manno-heptose. This Escherichia coli O157:H7 protein is Bifunctional protein HldE.